A 431-amino-acid polypeptide reads, in one-letter code: MLTPVFWITQDDDALLIRIRAPHGNIAELDYDHGDYMFVFTCPPYFLRLHFKQMVEEYGSGNGSVEWKSDEGEFHIKVPKMHKKEHFSNLDMITELLTPSTTHHQPHGNQLVEEMDDSEDDDEGDGSEFLVEQQPAAEPEEPKSDGKIEKFGYGFGWSKFGVIERLRDEIGKIVDILEPENVEIEKRADKLMEFDWENFDEGRYLADTLEPEEELLAVISSKFAQKLEISDEDRTKLKDLKKSKTSAKINGNDVEIMTSLIDIVFGYCYDQRVNDWESACESGWNCAKLSPSLSFFAKFSSVKECLLACTRRALTYPLYRSFQLTQRVIQDVCHVITAGGGRPALLHILCDLHRIFIESGEFRYILNDLMIADYIFWIQTVPDEILTRIQTDLTEISGKIDKYDIGWDLEVLEAEAKLANTQLDSDDEPDN.

It belongs to the SHQ1 family.

Functionally, required for the quantitative accumulation of H/ACA ribonucleoproteins (RNPs). This Caenorhabditis elegans protein is Protein SHQ1 homolog.